The primary structure comprises 223 residues: PKHD-type hydroxylase syc1482_d (223 aa).

The region spanning 78 to 176 (RVHSLLFSRY…RFACVGWVQS (99 aa)) is the Fe2OG dioxygenase domain. Residues His-96, Asp-98, and His-157 each contribute to the Fe cation site. Position 167 (Arg-167) interacts with 2-oxoglutarate.

Fe(2+) is required as a cofactor. L-ascorbate serves as cofactor.

The protein is PKHD-type hydroxylase syc1482_d of Synechococcus sp. (strain ATCC 27144 / PCC 6301 / SAUG 1402/1) (Anacystis nidulans).